The following is a 475-amino-acid chain: MDSSCHNATTKMLATAPARGNMMSTSKPLAFSIERIMARTPEPKALPVPHFLQGALPKGEPKHSLHLNSSIPCMIPFVPVAYDTSPKAGVTGSEPRKASLEAPAAPAAVPSAPAFSCSDLLNCALSLKGDLARDALPLQQYKLVRPRVVNHSSFHAMGALCYLNRGDGPCHPAAGVNIHPVASYFLSSPLHPQPKTYLAERNKLVVPAVEKYPSGVAFKDLSQAQLQHYMKESAQLLSEKIAFKTSDFSRGSPNAKPKVFTCEVCGKVFNAHYNLTRHMPVHTGARPFVCKVCGKGFRQASTLCRHKIIHTQEKPHKCNQCGKAFNRSSTLNTHTRIHAGYKPFVCEFCGKGFHQKGNYKNHKLTHSGEKQFKCNICNKAFHQVYNLTFHMHTHNDKKPFTCPTCGKGFCRNFDLKKHVRKLHDSSLGLARTPAGEPGTEPPPPLPQQPPMTLPPLQPPLPTPGPLQPGLHQGHQ.

An Engrailed homology 1 repressor motif is present at residues 28–43 (PLAFSIERIMARTPEP). 6 C2H2-type zinc fingers span residues 260–282 (FTCEVCGKVFNAHYNLTRHMPVH), 288–310 (FVCKVCGKGFRQASTLCRHKIIH), 316–338 (HKCNQCGKAFNRSSTLNTHTRIH), 344–366 (FVCEFCGKGFHQKGNYKNHKLTH), 372–394 (FKCNICNKAFHQVYNLTFHMHTH), and 400–423 (FTCPTCGKGFCRNFDLKKHVRKLH). The interval 428 to 475 (GLARTPAGEPGTEPPPPLPQQPPMTLPPLQPPLPTPGPLQPGLHQGHQ) is disordered. Pro residues predominate over residues 439–466 (TEPPPPLPQQPPMTLPPLQPPLPTPGPL).

This sequence belongs to the krueppel C2H2-type zinc-finger protein family. As to expression, expressed in brain. Little or no expression in other tissues. Overexpressed specifically in gastric cancers. A 2- to 20-fold increase is found in over 50% of gastric cancer tissues.

The protein localises to the nucleus. In terms of biological role, transcription repressor. Involved in the axonal projection and proper termination of olfactory sensory neurons (OSN). Plays a role in rostro-caudal patterning of the diencephalon and in prethalamic formation. Expression is required in OSN to cell-autonomously regulate OSN axon projections. Regulates non-cell-autonomously the layer formation of the olfactory bulb development and the interneurons. May be required for correct rostral migration of the interneuron progenitors. The chain is Fez family zinc finger protein 1 (FEZF1) from Homo sapiens (Human).